The sequence spans 227 residues: MAVKASGFIGKSAISVHLDFSSFPVKFSCLKQFSVSSPKPLVVLSVALSSPARTVESPPVGYRKNVGICLVSPCRKIFTASKIHIPDTWQMPQGGADEGEDLRNAAFRELREETGVTSAEFIAEIPNWLTYDFPREVKDKLNRKWRTSYKGQAQKWFLFKFTGKEEEINLLGDGTAKPEFKVWSWMLPEQVIEHAVYFKRPVYEHVIKQFNPYFVDEEKDSMNSSKD.

The transit peptide at 1-44 directs the protein to the chloroplast; the sequence is MAVKASGFIGKSAISVHLDFSSFPVKFSCLKQFSVSSPKPLVVL. One can recognise a Nudix hydrolase domain in the interval 61 to 208; the sequence is GYRKNVGICL…KRPVYEHVIK (148 aa). Residues 94–115 carry the Nudix box motif; the sequence is GGADEGEDLRNAAFRELREETG. Mn(2+) is bound by residues E109 and E113.

It belongs to the Nudix hydrolase family. Mg(2+) serves as cofactor. The cofactor is Mn(2+). In terms of tissue distribution, expressed in roots, leaves, stems and inflorescences.

Its subcellular location is the plastid. The protein localises to the chloroplast. Its function is as follows. Mediates the hydrolysis of some nucleoside diphosphate derivatives. Can use diadenosine 5',5'''-P(1)P(5) pentaphosphate (Ap(5)A) as substrates. The sequence is that of Nudix hydrolase 27, chloroplastic (NUDT27) from Arabidopsis thaliana (Mouse-ear cress).